Here is a 29-residue protein sequence, read N- to C-terminus: Kalata-B15 (29 aa).

Positions 1-29 (GLPVCGESCFGGSCYTPGCSCTWPICTRD) form a cross-link, cyclopeptide (Gly-Asp). Disulfide bonds link cysteine 5–cysteine 19, cysteine 9–cysteine 21, and cysteine 14–cysteine 26.

In terms of processing, this is a cyclic peptide.

Probably participates in a plant defense mechanism. This chain is Kalata-B15, found in Oldenlandia affinis.